Reading from the N-terminus, the 773-residue chain is C-Maf-inducing protein (773 aa).

Positions 1–28 (MDVTSSSGGGDPRQIEETKPLLGSDVSG) are disordered. The PH domain occupies 54–163 (LLQEGDIQVC…HSLQWKKKIY (110 aa)). A phosphoserine mark is found at serine 349, serine 377, serine 382, and serine 660. 4 LRR repeats span residues 663–686 (NLENLSLAFTNVTSACAEHLIKLP), 687–707 (SLKQLNLWSTQFGDAGLRLLS), 712–732 (MLQVLNLCETPVTDAGLLALS), and 736–756 (SLCSLNMNSTKLSADTYEDLK).

Interacts with FLNA.

It localises to the nucleus. The protein resides in the cytoplasm. Plays a role in T-cell signaling pathway. This is C-Maf-inducing protein (Cmip) from Mus musculus (Mouse).